The primary structure comprises 145 residues: Transcription antitermination protein NusB (145 aa).

Belongs to the NusB family.

In terms of biological role, involved in transcription antitermination. Required for transcription of ribosomal RNA (rRNA) genes. Binds specifically to the boxA antiterminator sequence of the ribosomal RNA (rrn) operons. This is Transcription antitermination protein NusB from Burkholderia vietnamiensis (strain G4 / LMG 22486) (Burkholderia cepacia (strain R1808)).